A 218-amino-acid chain; its full sequence is MEFPLDPLLTPIEARVLGALMEKQLTTPDAYPLTLNSLLLACNQKTSREPVSHYESGEVQRCINELQERKLVEVDWGARAARYDQRLTRVVSLDKAAQALLCVMMLRGPQTLSELLTRTQRMFDFGSTQAIEEKLQHLCVKTHPAFMHIPRLAGQREDRYMHLLSGAPDLEALAAQTHNRSERNDDGRTQLEERVTLLENQLAELQAQVARLLEKSAE.

Belongs to the UPF0502 family.

This is UPF0502 protein CJA_1529 from Cellvibrio japonicus (strain Ueda107) (Pseudomonas fluorescens subsp. cellulosa).